The chain runs to 164 residues: uncharacterized protein (164 aa).

A helical transmembrane segment spans residues 46–66 (FIRPNIYLIIFIIIVLLLLYY). Residues 72–137 (KADKEKEKLE…YNLNKENLRE (66 aa)) are a coiled coil. Residues 76–91 (EKEKLEDTDKEFDKST) are compositionally biased toward basic and acidic residues. The interval 76–114 (EKEKLEDTDKEFDKSTNNDTNSKKIYHRQKNSKTLNSSK) is disordered.

The protein localises to the membrane. This is an uncharacterized protein from Acanthamoeba polyphaga mimivirus (APMV).